A 121-amino-acid polypeptide reads, in one-letter code: Non-specific lipid-transfer protein 3 (121 aa).

A signal peptide spans 1-28 (MAGARRTMALVALVAVVAAAVVAERASA). 4 cysteine pairs are disulfide-bonded: Cys-32-Cys-80, Cys-42-Cys-57, Cys-58-Cys-103, and Cys-78-Cys-117.

The protein belongs to the plant LTP family.

In terms of biological role, plant non-specific lipid-transfer proteins transfer phospholipids as well as galactolipids across membranes. May play a role in wax or cutin deposition in the cell walls of expanding epidermal cells and certain secretory tissues. May possess an antifungal activity and protect the plant against pathogens. The protein is Non-specific lipid-transfer protein 3 (LTP110-A) of Oryza sativa subsp. indica (Rice).